The primary structure comprises 139 residues: ATP synthase epsilon chain (139 aa).

This sequence belongs to the ATPase epsilon chain family. F-type ATPases have 2 components, CF(1) - the catalytic core - and CF(0) - the membrane proton channel. CF(1) has five subunits: alpha(3), beta(3), gamma(1), delta(1), epsilon(1). CF(0) has three main subunits: a, b and c.

It is found in the cell inner membrane. Produces ATP from ADP in the presence of a proton gradient across the membrane. This Haemophilus ducreyi (strain 35000HP / ATCC 700724) protein is ATP synthase epsilon chain.